A 315-amino-acid polypeptide reads, in one-letter code: Acetyl-coenzyme A carboxylase carboxyl transferase subunit alpha (315 aa).

One can recognise a CoA carboxyltransferase C-terminal domain in the interval 32–289 (EIDMLEASLE…KEAFTKQLSE (258 aa)).

It belongs to the AccA family. In terms of assembly, acetyl-CoA carboxylase is a heterohexamer composed of biotin carboxyl carrier protein (AccB), biotin carboxylase (AccC) and two subunits each of ACCase subunit alpha (AccA) and ACCase subunit beta (AccD).

The protein localises to the cytoplasm. The catalysed reaction is N(6)-carboxybiotinyl-L-lysyl-[protein] + acetyl-CoA = N(6)-biotinyl-L-lysyl-[protein] + malonyl-CoA. Its pathway is lipid metabolism; malonyl-CoA biosynthesis; malonyl-CoA from acetyl-CoA: step 1/1. Component of the acetyl coenzyme A carboxylase (ACC) complex. First, biotin carboxylase catalyzes the carboxylation of biotin on its carrier protein (BCCP) and then the CO(2) group is transferred by the carboxyltransferase to acetyl-CoA to form malonyl-CoA. This is Acetyl-coenzyme A carboxylase carboxyl transferase subunit alpha from Staphylococcus carnosus (strain TM300).